The chain runs to 541 residues: Chaperonin GroEL (541 aa).

ATP-binding positions include 29–32, 86–90, Gly413, 478–480, and Asp494; these read TIGP, DGTTT, and NAA.

It belongs to the chaperonin (HSP60) family. As to quaternary structure, forms a cylinder of 14 subunits composed of two heptameric rings stacked back-to-back. Interacts with the co-chaperonin GroES.

It localises to the cytoplasm. The enzyme catalyses ATP + H2O + a folded polypeptide = ADP + phosphate + an unfolded polypeptide.. Functionally, together with its co-chaperonin GroES, plays an essential role in assisting protein folding. The GroEL-GroES system forms a nano-cage that allows encapsulation of the non-native substrate proteins and provides a physical environment optimized to promote and accelerate protein folding. The polypeptide is Chaperonin GroEL (Oenococcus oeni (strain ATCC BAA-331 / PSU-1)).